A 356-amino-acid chain; its full sequence is Protein ATP1B4 (356 aa).

At 1–109 the chain is on the nuclear side; that stretch reads MRRQLRSRRA…SLARTGQSRS (109 aa). The tract at residues 32–77 is disordered; sequence LADEEEEAEEEAQVMMVPGLEEEEEEEEGKEEEEEREEEEGQGQST. 2 stretches are compositionally biased toward acidic residues: residues 33-43 and 51-72; these read ADEEEEAEEEA and LEEE…EEEG. A helical; Signal-anchor for type II membrane protein membrane pass occupies residues 110–130; the sequence is LILVIYFFFYASLAAVITLFI. The Perinuclear space portion of the chain corresponds to 131-356; the sequence is YMLFLAISPY…RIIFTLNIET (226 aa).

The protein belongs to the X(+)/potassium ATPases subunit beta family. As to quaternary structure, does not associate with known Na,K-ATPase alpha-subunits. Associates with a SMAD7-transcriptional complex. Interacts with SNW1 and TOR1AIP1. In terms of tissue distribution, expressed in perinatal myocytes (at protein level). Expressed during postnatal development in skeletal muscle and heart.

It localises to the nucleus inner membrane. Its function is as follows. May act as a transcriptional coregulator during muscle development through its interaction with SNW1. Has lost its ancestral function as a Na,K-ATPase beta-subunit. The protein is Protein ATP1B4 (Atp1b4) of Rattus norvegicus (Rat).